Reading from the N-terminus, the 252-residue chain is Cyclic di-GMP binding protein VCA0042 (252 aa).

Residues 1–11 are compositionally biased toward basic and acidic residues; that stretch reads MNSRPAEKIDN. Residues 1-24 form a disordered region; it reads MNSRPAEKIDNNDGQTETPRSKTV. Polar residues predominate over residues 12-24; the sequence is NDGQTETPRSKTV. The PilZ domain maps to 134–233; the sequence is QLRKEPRFEL…EEGRNNAKNL (100 aa).

Belongs to the YcgR family. Dimer.

The protein localises to the bacterial flagellum basal body. In terms of biological role, may act as a flagellar brake, regulating swimming and swarming in a bis-(3'-5') cyclic diguanylic acid (c-di-GMP)-dependent manner. Increasing levels of c-di-GMP lead to decreased motility (Potential). Binds bis-(3'-5') cyclic diguanylic acid (c-di-GMP) with a dissociation constant of 170 nM in the presence of 10 mM KCl and with 100 nM in its absence. Binds 1 to 2 c-di-GMP per subunit. Only 1 c-di-GMP is seen in the wild-type crystal, while 2 are seen in the mutant. Depending on the concentration of K(+) stoichiometries of 1:1, 1.43:1 and 2:1 are determined by isothermal titration calorimetry. This is Cyclic di-GMP binding protein VCA0042 from Vibrio cholerae serotype O1 (strain ATCC 39315 / El Tor Inaba N16961).